The following is a 402-amino-acid chain: Homoserine O-acetyltransferase (402 aa).

In terms of domain architecture, AB hydrolase-1 spans 38-359 (NAVLVCHALT…HGHDAFLVEP (322 aa)). Ser146 functions as the Nucleophile in the catalytic mechanism. Arg217 lines the substrate pocket. Catalysis depends on residues Asp319 and His352. Residue Asp353 participates in substrate binding.

It belongs to the AB hydrolase superfamily. MetX family. In terms of assembly, homodimer.

The protein resides in the cytoplasm. The catalysed reaction is L-homoserine + acetyl-CoA = O-acetyl-L-homoserine + CoA. The protein operates within amino-acid biosynthesis; L-methionine biosynthesis via de novo pathway; O-acetyl-L-homoserine from L-homoserine: step 1/1. In terms of biological role, transfers an acetyl group from acetyl-CoA to L-homoserine, forming acetyl-L-homoserine. This is Homoserine O-acetyltransferase from Haloarcula marismortui (strain ATCC 43049 / DSM 3752 / JCM 8966 / VKM B-1809) (Halobacterium marismortui).